Here is a 199-residue protein sequence, read N- to C-terminus: Superoxide dismutase [Mn/Fe] 2 (199 aa).

Fe(3+) is bound by residues histidine 27, histidine 81, aspartate 161, and histidine 165. Mn(2+)-binding residues include histidine 27, histidine 81, aspartate 161, and histidine 165.

Belongs to the iron/manganese superoxide dismutase family. As to quaternary structure, homodimer. Can also form a heterodimer with SodA. Mn(2+) is required as a cofactor. The cofactor is Fe(3+).

It catalyses the reaction 2 superoxide + 2 H(+) = H2O2 + O2. In terms of biological role, destroys superoxide anion radicals which are normally produced within the cells and which are toxic to biological systems. Catalyzes the dismutation of superoxide anion radicals into O2 and H2O2 by successive reduction and oxidation of the transition metal ion at the active site. This chain is Superoxide dismutase [Mn/Fe] 2 (sodM), found in Staphylococcus aureus (strain USA300).